The sequence spans 323 residues: tRNA dimethylallyltransferase (323 aa).

32–39 (GPTASGKS) serves as a coordination point for ATP. 34 to 39 (TASGKS) lines the substrate pocket. The interaction with substrate tRNA stretch occupies residues 57–60 (DSMQ).

This sequence belongs to the IPP transferase family. As to quaternary structure, monomer. The cofactor is Mg(2+).

The catalysed reaction is adenosine(37) in tRNA + dimethylallyl diphosphate = N(6)-dimethylallyladenosine(37) in tRNA + diphosphate. Its function is as follows. Catalyzes the transfer of a dimethylallyl group onto the adenine at position 37 in tRNAs that read codons beginning with uridine, leading to the formation of N6-(dimethylallyl)adenosine (i(6)A). This is tRNA dimethylallyltransferase from Rhodopseudomonas palustris (strain BisB5).